A 287-amino-acid chain; its full sequence is MAAPRNLTGDGGARQLVKDEESPAASSAAKGLLNDDSPTGKRTKSERFPLSRWEFAVFFTVFLVFTTGLFCIYLTMPAAEYGKLKVPRTISDLRLLKENLGSYASEYQARFILGYCSTYIFMQTFMIPGTIFMSLLAGALFGVVRGFVLVVLNATAGACSCFFLSKLVGRPLVNWLWPEKLRFFQAEIAKRRDRLLNYMLFLRITPTLPNLFINLSSPIVDIPFHVFFLATLVGLMPASYITVRAGLALGDLRSVKDLYDFKTLSVLFLIGSISIFPALLKRKRVYE.

Positions 1–44 (MAAPRNLTGDGGARQLVKDEESPAASSAAKGLLNDDSPTGKRTK) are disordered. S37 is subject to Phosphoserine. The next 5 membrane-spanning stretches (helical) occupy residues 55–75 (FAVF…IYLT), 124–144 (TFMI…FGVV), 147–167 (FVLV…LSKL), 218–238 (PIVD…LMPA), and 260–280 (DFKT…PALL).

The protein localises to the membrane. This is an uncharacterized protein from Arabidopsis thaliana (Mouse-ear cress).